Reading from the N-terminus, the 83-residue chain is uncharacterized protein (83 aa).

This is an uncharacterized protein from Archaeoglobus fulgidus (strain ATCC 49558 / DSM 4304 / JCM 9628 / NBRC 100126 / VC-16).